Here is a 2602-residue protein sequence, read N- to C-terminus: Non-reducing polyketide synthase SAT8 (2602 aa).

C130 serves as the catalytic Nucleophile; for transacylase activity. H249 functions as the Proton donor/acceptor; for transacylase activity in the catalytic mechanism. A disordered region spans residues 379–398; sequence MLENSTSPPSPAATSSNSHC. Residues 382–396 show a composition bias toward low complexity; the sequence is NSTSPPSPAATSSNS. The Ketosynthase family 3 (KS3) domain maps to 404–822; sequence PRDIAIVGMS…GSNAAMVVTQ (419 aa). Active-site for beta-ketoacyl synthase activity residues include C571, H706, and H745. A malonyl-CoA:ACP transacylase (MAT) region spans residues 926-1216; it reads FGGQMSTFVG…AMARRSLDSN (291 aa). An N-terminal hotdog fold region spans residues 1298–1442; the sequence is GPLFGLLTFV…GKLDLLSSSE (145 aa). The PKS/mFAS DH domain maps to 1298-1618; the sequence is GPLFGLLTFV…YTRIPRHSMT (321 aa). Residues 1331–1616 form a product template (PT) domain region; it reads LVIPHIIART…IAYTRIPRHS (286 aa). H1335 (proton acceptor; for dehydratase activity) is an active-site residue. Positions 1467–1618 are C-terminal hotdog fold; that stretch reads GDVSGLQGRS…YTRIPRHSMT (152 aa). D1524 functions as the Proton donor; for dehydratase activity in the catalytic mechanism. One can recognise a Carrier domain in the interval 1658-1733; the sequence is DTLKQTVGQI…AFVRYISKVV (76 aa). At S1692 the chain carries O-(pantetheine 4'-phosphoryl)serine. Residues 1737 to 1772 form a disordered region; it reads DDLGTPSHSDNDSHVTGTTATPNSSSASSDTHHGNS. Low complexity predominate over residues 1752–1765; the sequence is TGTTATPNSSSASS. A methyltransferase domain region spans residues 1979–2150; sequence VEKVKDDFQG…GYGHVDWTDG (172 aa). The NADPH-binding domain stretch occupies residues 2229–2530; it reads IVVVTGATGS…IPLGEWVRKV (302 aa).

The cofactor is pantetheine 4'-phosphate.

It participates in mycotoxin biosynthesis. In terms of biological role, non-reducing polyketide synthase; part of the satratoxin SC1 cluster involved in the biosynthesis of satratoxins, trichothecene mycotoxins that are associated with human food poisonings. Satratoxins are suggested to be made by products of multiple gene clusters (SC1, SC2 and SC3) that encode 21 proteins in all, including polyketide synthases, acetyltransferases, and other enzymes expected to modify the trichothecene skeleton. SC1 encodes 10 proteins, SAT1 to SAT10. The largest are SAT8, which encodes a putative polyketide synthase (PKS) with a conventional non-reducing architecture, and SAT10, a putative protein containing four ankyrin repeats and thus may be involved in protein scaffolding. The putative short-chain reductase SAT3 may assist the PKS in some capacity. SAT6 contains a secretory lipase domain and acts probably as a trichothecene esterase. SAT5 encodes a putative acetyltransferase, and so, with SAT6, may affect endogenous protection from toxicity. The probable transcription factor SAT9 may regulate the expression of the SC1 cluster. SC2 encodes proteins SAT11 to SAT16, the largest of which encodes the putative reducing PKS SAT13. SAT11 is a cytochrome P450 monooxygenase, while SAT14 and SAT16 are probable acetyltransferases. The SC2 cluster may be regulated by the transcription factor SAT15. SC3 is a small cluster that encodes 5 proteins, SAT17 to SAT21. SAT21 is a putative MFS-type transporter which may have a role in exporting secondary metabolites. The four other proteins putatively encoded in SC3 include the taurine hydroxylase-like protein SAT17, the O-methyltransferase SAT18, the acetyltransferase SAT19, and the Cys6-type zinc finger SAT20, the latter being probably involved in regulation of SC3 expression. The sequence is that of Non-reducing polyketide synthase SAT8 from Stachybotrys chartarum (strain CBS 109288 / IBT 7711) (Toxic black mold).